The primary structure comprises 145 residues: Hemoglobin fetal subunit beta (145 aa).

Positions Met1–His145 constitute a Globin domain. 2 residues coordinate heme b: His62 and His91.

It belongs to the globin family. As to quaternary structure, heterotetramer of two alpha chains and two beta chains.

This is Hemoglobin fetal subunit beta from Ovis aries (Sheep).